Consider the following 84-residue polypeptide: Sulfur carrier protein TusA (84 aa).

C19 functions as the Cysteine persulfide intermediate in the catalytic mechanism.

This sequence belongs to the sulfur carrier protein TusA family. In terms of assembly, interacts with IscS.

Its subcellular location is the cytoplasm. The protein operates within tRNA modification. Functionally, sulfur carrier protein involved in sulfur trafficking in the cell. Part of a sulfur-relay system required for 2-thiolation during synthesis of 2-thiouridine of the modified wobble base 5-methylaminomethyl-2-thiouridine (mnm(5)s(2)U) in tRNA. Interacts with IscS and stimulates its cysteine desulfurase activity. Accepts an activated sulfur from IscS, which is then transferred to TusD, and thus determines the direction of sulfur flow from IscS to 2-thiouridine formation. Also appears to be involved in sulfur transfer for the biosynthesis of molybdopterin. The sequence is that of Sulfur carrier protein TusA from Photorhabdus laumondii subsp. laumondii (strain DSM 15139 / CIP 105565 / TT01) (Photorhabdus luminescens subsp. laumondii).